The chain runs to 139 residues: UPF0102 protein Caul_0175 (139 aa).

The protein belongs to the UPF0102 family.

This Caulobacter sp. (strain K31) protein is UPF0102 protein Caul_0175.